Here is a 447-residue protein sequence, read N- to C-terminus: Probable glycine dehydrogenase (decarboxylating) subunit 1 (447 aa).

Belongs to the GcvP family. N-terminal subunit subfamily. In terms of assembly, the glycine cleavage system is composed of four proteins: P, T, L and H. In this organism, the P 'protein' is a heterodimer of two subunits.

The enzyme catalyses N(6)-[(R)-lipoyl]-L-lysyl-[glycine-cleavage complex H protein] + glycine + H(+) = N(6)-[(R)-S(8)-aminomethyldihydrolipoyl]-L-lysyl-[glycine-cleavage complex H protein] + CO2. In terms of biological role, the glycine cleavage system catalyzes the degradation of glycine. The P protein binds the alpha-amino group of glycine through its pyridoxal phosphate cofactor; CO(2) is released and the remaining methylamine moiety is then transferred to the lipoamide cofactor of the H protein. The sequence is that of Probable glycine dehydrogenase (decarboxylating) subunit 1 from Sulfolobus acidocaldarius (strain ATCC 33909 / DSM 639 / JCM 8929 / NBRC 15157 / NCIMB 11770).